Here is a 254-residue protein sequence, read N- to C-terminus: Glutamate racemase (254 aa).

Substrate is bound by residues 10–11 and 42–43; these read DS and YG. The active-site Proton donor/acceptor is cysteine 73. 74 to 75 contacts substrate; sequence NT. Residue cysteine 183 is the Proton donor/acceptor of the active site. 184–185 is a binding site for substrate; the sequence is TH.

It belongs to the aspartate/glutamate racemases family.

It carries out the reaction L-glutamate = D-glutamate. The protein operates within cell wall biogenesis; peptidoglycan biosynthesis. Functionally, provides the (R)-glutamate required for cell wall biosynthesis. The protein is Glutamate racemase of Herpetosiphon aurantiacus (strain ATCC 23779 / DSM 785 / 114-95).